We begin with the raw amino-acid sequence, 474 residues long: UDP-glycosyltransferase 71C2 (474 aa).

Residues Ser-293, 352-354 (APQ), 369-377 (HCGWNSILE), and 391-394 (YAEQ) each bind UDP-alpha-D-glucose.

Belongs to the UDP-glycosyltransferase family.

Possesses low quercetin 3-O-glucosyltransferase, 7-O-glucosyltransferase and 3'-O-glucosyltransferase activities in vitro. Glucosylates other secondary metabolites in vitro like vanillin, trans-resveratrol, curumin and etoposide. This Arabidopsis thaliana (Mouse-ear cress) protein is UDP-glycosyltransferase 71C2 (UGT71C2).